A 39-amino-acid chain; its full sequence is ORF8a protein (39 aa).

A signal peptide spans 1–15 (MKLLIVLTCISLCSC). One can recognise an SARS ORF8 Ig-like domain in the interval 16 to 39 (ICTVVQRCASNKPHVLEDPCKVQH).

The sequence is that of ORF8a protein from Homo sapiens (Human).